The sequence spans 541 residues: Chaperonin GroEL 1 (541 aa).

ATP-binding positions include 29 to 32 (TLGP), 86 to 90 (DGTTT), Gly-413, 477 to 479 (NAA), and Asp-493.

It belongs to the chaperonin (HSP60) family. Forms a cylinder of 14 subunits composed of two heptameric rings stacked back-to-back. Interacts with the co-chaperonin GroES.

The protein resides in the cytoplasm. It catalyses the reaction ATP + H2O + a folded polypeptide = ADP + phosphate + an unfolded polypeptide.. In terms of biological role, together with its co-chaperonin GroES, plays an essential role in assisting protein folding. The GroEL-GroES system forms a nano-cage that allows encapsulation of the non-native substrate proteins and provides a physical environment optimized to promote and accelerate protein folding. This is Chaperonin GroEL 1 from Nocardioides sp. (strain ATCC BAA-499 / JS614).